Reading from the N-terminus, the 431-residue chain is Gamma-glutamyl phosphate reductase (431 aa).

It belongs to the gamma-glutamyl phosphate reductase family.

The protein localises to the cytoplasm. It carries out the reaction L-glutamate 5-semialdehyde + phosphate + NADP(+) = L-glutamyl 5-phosphate + NADPH + H(+). Its pathway is amino-acid biosynthesis; L-proline biosynthesis; L-glutamate 5-semialdehyde from L-glutamate: step 2/2. Its function is as follows. Catalyzes the NADPH-dependent reduction of L-glutamate 5-phosphate into L-glutamate 5-semialdehyde and phosphate. The product spontaneously undergoes cyclization to form 1-pyrroline-5-carboxylate. This Acetivibrio thermocellus (strain ATCC 27405 / DSM 1237 / JCM 9322 / NBRC 103400 / NCIMB 10682 / NRRL B-4536 / VPI 7372) (Clostridium thermocellum) protein is Gamma-glutamyl phosphate reductase.